The primary structure comprises 553 residues: MPSSRLQQQFIRLWQHHQGKEAETTLQELANVLHCSKRHIRSLLNNMQKAGWLQWQAESGRGKRSQLNFLRDGWELQQQRAEELLEQHNVEKLVQLVGDKDTVRHMVLSQIERRFRQGKNLLRILYYRPFPNLLPGSPLRRSEIHLVRQIFNSLTRINEENGEPEADLAHHWQQLSSNHWRFYLRPAIHFHHGRELQMADVIASLQRLRNLPLFSHIEKVTTPTPYVIDIFLSEPDLWLSLLIGSPHAMILPQEWQKLPNFSRMPVGTGPYQVIKNSAQKLQIRAFDNYFGFRALIDQVNIWFLPELAEKLVCTTLHLESDSTDNNSLDSRIEEGCYFLLHDHRSTKCKREDVRQWLCSLLTPINLLAHCDPFYQRHWSPAYGLLLRWHHSKLISELNKPEDITHLTVTLCHQHHEYHTISQILQAILTKCGVELKINIVDYDTWFNGNTESDFWLATANFYNPLEFSLFATLYEMPLLKKCLGNDLSKEVSQWRRQELSLEEWCEKIVDEHWLHPLFHHWLELQGQRSMRGVKMNTFGWFDFKSAWFNPYEG.

An HTH marR-type domain is found at 1 to 117 (MPSSRLQQQF…LSQIERRFRQ (117 aa)). A DNA-binding region (H-T-H motif) is located at residues 26 to 49 (LQELANVLHCSKRHIRSLLNNMQK). A solute-binding region spans residues 163–494 (EPEADLAHHW…NDLSKEVSQW (332 aa)).

Its function is as follows. Activates the small RNA gene sgrS under glucose-phosphate stress conditions as well as yfdZ. Represses its own transcription under both stress and non-stress conditions. Might act as a sensor of the intracellular accumulation of phosphoglucose by binding these molecules in its C-terminal solute-binding domain. In Photorhabdus laumondii subsp. laumondii (strain DSM 15139 / CIP 105565 / TT01) (Photorhabdus luminescens subsp. laumondii), this protein is HTH-type transcriptional regulator SgrR.